We begin with the raw amino-acid sequence, 436 residues long: Bifunctional protein GlmU (436 aa).

The segment at 1-226 (MNEISIIILA…ETNFMGINDK (226 aa)) is pyrophosphorylase. Residues 9-12 (LAAG), Lys23, Gln75, and 82-83 (GT) each bind UDP-N-acetyl-alpha-D-glucosamine. Asp105 serves as a coordination point for Mg(2+). The UDP-N-acetyl-alpha-D-glucosamine site is built by Gly138, Glu152, Asn167, and Asn224. Asn224 provides a ligand contact to Mg(2+). Positions 227 to 247 (FALSIAEEIMQNRIKENLMKN) are linker. The tract at residues 248–436 (GVIMSLPDTI…YKFFGKNDEK (189 aa)) is N-acetyltransferase. UDP-N-acetyl-alpha-D-glucosamine contacts are provided by Arg311 and Lys328. Residue His339 is the Proton acceptor of the active site. 2 residues coordinate UDP-N-acetyl-alpha-D-glucosamine: Tyr342 and Asn353. Residues 362-363 (NY), Ser381, Ala399, and Arg416 contribute to the acetyl-CoA site.

It in the N-terminal section; belongs to the N-acetylglucosamine-1-phosphate uridyltransferase family. This sequence in the C-terminal section; belongs to the transferase hexapeptide repeat family. Homotrimer. The cofactor is Mg(2+).

The protein resides in the cytoplasm. It catalyses the reaction alpha-D-glucosamine 1-phosphate + acetyl-CoA = N-acetyl-alpha-D-glucosamine 1-phosphate + CoA + H(+). It carries out the reaction N-acetyl-alpha-D-glucosamine 1-phosphate + UTP + H(+) = UDP-N-acetyl-alpha-D-glucosamine + diphosphate. It functions in the pathway nucleotide-sugar biosynthesis; UDP-N-acetyl-alpha-D-glucosamine biosynthesis; N-acetyl-alpha-D-glucosamine 1-phosphate from alpha-D-glucosamine 6-phosphate (route II): step 2/2. Its pathway is nucleotide-sugar biosynthesis; UDP-N-acetyl-alpha-D-glucosamine biosynthesis; UDP-N-acetyl-alpha-D-glucosamine from N-acetyl-alpha-D-glucosamine 1-phosphate: step 1/1. It participates in bacterial outer membrane biogenesis; LPS lipid A biosynthesis. Catalyzes the last two sequential reactions in the de novo biosynthetic pathway for UDP-N-acetylglucosamine (UDP-GlcNAc). The C-terminal domain catalyzes the transfer of acetyl group from acetyl coenzyme A to glucosamine-1-phosphate (GlcN-1-P) to produce N-acetylglucosamine-1-phosphate (GlcNAc-1-P), which is converted into UDP-GlcNAc by the transfer of uridine 5-monophosphate (from uridine 5-triphosphate), a reaction catalyzed by the N-terminal domain. In Campylobacter fetus subsp. fetus (strain 82-40), this protein is Bifunctional protein GlmU.